Reading from the N-terminus, the 532-residue chain is Bifunctional purine biosynthesis protein PurH (532 aa).

One can recognise an MGS-like domain in the interval 1–148 (MQTPKPIKRA…KNHKDVTIVV (148 aa)).

The protein belongs to the PurH family.

It catalyses the reaction (6R)-10-formyltetrahydrofolate + 5-amino-1-(5-phospho-beta-D-ribosyl)imidazole-4-carboxamide = 5-formamido-1-(5-phospho-D-ribosyl)imidazole-4-carboxamide + (6S)-5,6,7,8-tetrahydrofolate. It carries out the reaction IMP + H2O = 5-formamido-1-(5-phospho-D-ribosyl)imidazole-4-carboxamide. Its pathway is purine metabolism; IMP biosynthesis via de novo pathway; 5-formamido-1-(5-phospho-D-ribosyl)imidazole-4-carboxamide from 5-amino-1-(5-phospho-D-ribosyl)imidazole-4-carboxamide (10-formyl THF route): step 1/1. It participates in purine metabolism; IMP biosynthesis via de novo pathway; IMP from 5-formamido-1-(5-phospho-D-ribosyl)imidazole-4-carboxamide: step 1/1. The protein is Bifunctional purine biosynthesis protein PurH of Alteromonas mediterranea (strain DSM 17117 / CIP 110805 / LMG 28347 / Deep ecotype).